Here is a 154-residue protein sequence, read N- to C-terminus: Small ribosomal subunit protein uS15 (154 aa).

A disordered region spans residues 1 to 23; sequence MNKKRDKGQSHSTRPARAGPPRW.

The protein belongs to the universal ribosomal protein uS15 family. Part of the 30S ribosomal subunit.

The polypeptide is Small ribosomal subunit protein uS15 (Staphylothermus marinus (strain ATCC 43588 / DSM 3639 / JCM 9404 / F1)).